Consider the following 318-residue polypeptide: NADH-ubiquinone oxidoreductase chain 1 (318 aa).

Transmembrane regions (helical) follow at residues 2-22 (FMINIACLIIPILLAVAFLTL), 69-89 (LLFTVAPTLALTLALTMWLPL), 100-120 (LGVLFILAISSLAVYSILWSG), 146-166 (LAIILLSVLLMSGSFTLTNLI), 171-191 (HMWLIIPTWPLAMMWFISTLA), 231-251 (IMMMNALTTLLFLGALHTPLV), 253-273 (GIYTANFVLKTLILTIMFLWI), and 285-305 (LMHLLWKNFLPLTLAMLMWHV).

Belongs to the complex I subunit 1 family. Core subunit of respiratory chain NADH dehydrogenase (Complex I) which is composed of 45 different subunits.

Its subcellular location is the mitochondrion inner membrane. The catalysed reaction is a ubiquinone + NADH + 5 H(+)(in) = a ubiquinol + NAD(+) + 4 H(+)(out). Its function is as follows. Core subunit of the mitochondrial membrane respiratory chain NADH dehydrogenase (Complex I) which catalyzes electron transfer from NADH through the respiratory chain, using ubiquinone as an electron acceptor. Essential for the catalytic activity and assembly of complex I. This is NADH-ubiquinone oxidoreductase chain 1 (MT-ND1) from Myrmecophaga tridactyla (Giant anteater).